A 917-amino-acid chain; its full sequence is GTPase-activating Rap/Ran-GAP domain-like protein 3 (917 aa).

A Rap-GAP domain is found at 185 to 401 (LLVLEEQEGS…RTLDMLIRSL (217 aa)). Residues 483–792 (PHEVVCADSW…QLVASRSDIY (310 aa)) form the CNH domain.

It belongs to the GARNL3 family.

This is GTPase-activating Rap/Ran-GAP domain-like protein 3 (GARNL3) from Gallus gallus (Chicken).